Reading from the N-terminus, the 72-residue chain is Translational regulator CsrA (72 aa).

Belongs to the CsrA/RsmA family. Homodimer; the beta-strands of each monomer intercalate to form a hydrophobic core, while the alpha-helices form wings that extend away from the core.

The protein resides in the cytoplasm. In terms of biological role, a translational regulator that binds mRNA to regulate translation initiation and/or mRNA stability. Usually binds in the 5'-UTR at or near the Shine-Dalgarno sequence preventing ribosome-binding, thus repressing translation. Its main target seems to be the major flagellin gene, while its function is anatagonized by FliW. This Ruminiclostridium cellulolyticum (strain ATCC 35319 / DSM 5812 / JCM 6584 / H10) (Clostridium cellulolyticum) protein is Translational regulator CsrA.